Reading from the N-terminus, the 889-residue chain is Alanine--tRNA ligase (889 aa).

Residues histidine 587, histidine 591, cysteine 691, and histidine 695 each contribute to the Zn(2+) site. Disordered stretches follow at residues 734–760 (QQEQESKRKAEEAVAKEQLEKQREENK) and 866–889 (AQGGGKDTSKKDEAISKAKSMILG). Basic and acidic residues predominate over residues 872 to 881 (DTSKKDEAIS).

The protein belongs to the class-II aminoacyl-tRNA synthetase family. Requires Zn(2+) as cofactor.

The protein resides in the cytoplasm. It catalyses the reaction tRNA(Ala) + L-alanine + ATP = L-alanyl-tRNA(Ala) + AMP + diphosphate. Functionally, catalyzes the attachment of alanine to tRNA(Ala) in a two-step reaction: alanine is first activated by ATP to form Ala-AMP and then transferred to the acceptor end of tRNA(Ala). Also edits incorrectly charged Ser-tRNA(Ala) and Gly-tRNA(Ala) via its editing domain. This is Alanine--tRNA ligase from Nitrosopumilus maritimus (strain SCM1).